The sequence spans 201 residues: Peptide deformylase (201 aa).

Fe cation is bound by residues Cys-121 and His-163. Residue Glu-164 is part of the active site. Residue His-167 coordinates Fe cation.

This sequence belongs to the polypeptide deformylase family. Fe(2+) serves as cofactor.

It carries out the reaction N-terminal N-formyl-L-methionyl-[peptide] + H2O = N-terminal L-methionyl-[peptide] + formate. In terms of biological role, removes the formyl group from the N-terminal Met of newly synthesized proteins. Requires at least a dipeptide for an efficient rate of reaction. N-terminal L-methionine is a prerequisite for activity but the enzyme has broad specificity at other positions. This is Peptide deformylase from Parasynechococcus marenigrum (strain WH8102).